The chain runs to 139 residues: Putative nickel-responsive regulator (139 aa).

Ni(2+) contacts are provided by His79, His90, His92, and Cys98.

The protein belongs to the transcriptional regulatory CopG/NikR family. Ni(2+) serves as cofactor.

Its function is as follows. Transcriptional regulator. The polypeptide is Putative nickel-responsive regulator (Geobacter metallireducens (strain ATCC 53774 / DSM 7210 / GS-15)).